Here is a 381-residue protein sequence, read N- to C-terminus: Gas vesicle protein C (381 aa).

Tandem repeats lie at residues 22 to 59, 60 to 84, 85 to 122, 123 to 160, 161 to 192, 193 to 232, and 233 to 274. Residues 22–274 form a 7 X approximate tandem repeats region; the sequence is QAFAAYADEF…TETEVDIPPI (253 aa). The disordered stretch occupies residues 261–333; it reads AVTGTETEVD…EDDQFLDDET (73 aa). A compositionally biased stretch (acidic residues) spans 276–318; it reads DSVEPDGEDEDSKADDVEAEAEVETVEMEFGAEMDTEADEDVQ.

The protein belongs to the halobacterial gas vesicle GvpC family. Detected as 2 slightly different sizes in vivo; the proteins appears larger in SDS-PAGE probably due to the acidic tail.

The protein resides in the gas vesicle. In terms of biological role, confers stability, involved in shaping gas vesicles (GV), hollow, gas filled proteinaceous nanostructures found in some microorganisms. They allow positioning of halobacteria at the optimal depth for growth in the poorly aerated, shallow brine pools of their habitat. Expression of a 9.5 kb mc-vac DNA fragment containing 2 divergently transcribed regions (gvpD-gvpE-gvpF-gvpG-gvpH-gvpI-gvpJ-gvpK-gvpL-gvpM and gvpA-gvpC-gvpN-gvpO) allows H.volcanii to produce gas vesicles. The sequence is that of Gas vesicle protein C from Haloferax mediterranei (strain ATCC 33500 / DSM 1411 / JCM 8866 / NBRC 14739 / NCIMB 2177 / R-4) (Halobacterium mediterranei).